A 385-amino-acid chain; its full sequence is Transmembrane protein 271 (385 aa).

A run of 2 helical transmembrane segments spans residues 9-29 (CAAL…AVGL) and 50-70 (GAFY…AALL). The interval 83–111 (EPGPGLGVPAAPAGAPEATPGESGAAAGA) is disordered. Residues 121–141 (LLLGVLVFMLGVLSAFAGAVI) form a helical membrane-spanning segment. A disordered region spans residues 160–203 (PRAPGSSPGSAPGSTPGSAPGSAPGSAPGSAPGAPRARSTLDSA). A compositionally biased stretch (low complexity) spans 163 to 197 (PGSSPGSAPGSTPGSAPGSAPGSAPGSAPGAPRAR). A helical transmembrane segment spans residues 219–239 (VLSTVFNSLECLLGLLSLLLV). The tract at residues 245–305 (SQARRGRRGR…SEASILSPEE (61 aa)) is disordered. Residues 246–258 (QARRGRRGRRRGG) show a composition bias toward basic residues. Over residues 259 to 277 (RALARPRGGSGLRAQPPAS) the composition is skewed to low complexity. Basic residues predominate over residues 278–292 (RARRGRRGRRGRRLQ).

It is found in the membrane. In Homo sapiens (Human), this protein is Transmembrane protein 271.